The following is a 476-amino-acid chain: Rab-3A-interacting protein (476 aa).

A phosphoserine; by PKB/AKT1 mark is found at S163 and S165. Residues S165–L260 adopt a coiled-coil conformation. Positions S262–H297 are disordered. 4 positions are modified to phosphoserine: S263, S266, S288, and S296. Residues K287–H297 are compositionally biased toward polar residues. The interval T435–L444 is important for RAB11A binding.

The protein belongs to the SEC2 family. In terms of assembly, homodimer. Interacts with the N-terminal region of SSX2. Interacts with the GDP-bound forms of RAB8A and RAB8B. The interaction with RAB8A is prevented by phosphorylation of RAB8A at 'Thr-72'. Interacts with the GDP-bound forms of RAB3A and RAB3D. Interacts with DCDC1. Interacts (via the N-terminal region) with TRAPPC14; this interaction mediates RAB3IP association with the TRAPP II complex. Forms a heterotetramer with RAB11A where RAB3IP homodimer binds two RAB11A subunits. Forms a complex with RAB11A and RAB11FIP3, probably a heterohexamer with two of each protein subunit, where Rabin8/RAB3IP and RAB11FIP3 simultaneously bind to RAB11A; the complex promotes preciliary trafficking. Forms a complex containing RAB11A, ASAP1, RAB3IP, RAP11FIP3 and ARF4; the complex promotes preciliary trafficking; the complex binds to RHO in photoreceptor cells and promotes RHO ciliary transport. Post-translationally, phosphorylated by AKT1; the phosphorylation alters its GEF activity. In terms of tissue distribution, expressed in brain, kidney, heart, pancreas and placenta. Not detected in skeletal muscle or liver.

The protein localises to the cytoplasm. Its subcellular location is the nucleus. It localises to the cytoskeleton. The protein resides in the cell projection. It is found in the lamellipodium. The protein localises to the vesicle. Its subcellular location is the microtubule organizing center. It localises to the centrosome. Its activity is regulated as follows. Phosphorylation by ATK1 alters its GEF activity. Complex formation with RAB11A and RAB11FIP3 and ciliogenesis function are competitively inhibited by RAB11A-WDR44 interaction. Its function is as follows. Guanine nucleotide exchange factor (GEF) which may activate RAB8A and RAB8B. Promotes the exchange of GDP to GTP, converting inactive GDP-bound Rab proteins into their active GTP-bound form. Mediates the release of GDP from RAB8A and RAB8B but not from RAB3A or RAB5. Modulates actin organization and promotes polarized transport of RAB8A-specific vesicles to the cell surface. Together with RAB11A, RAB8A, the exocyst complex, PARD3, PRKCI, ANXA2, CDC42 and DNMBP promotes transcytosis of PODXL to the apical membrane initiation sites (AMIS), apical surface formation and lumenogenesis. Part of the ciliary targeting complex containing Rab11, ASAP1, RAB3IP and RAB11FIP3 and ARF4 that promotes RAB3IP preciliary vesicle trafficking to mother centriole and ciliogenesis initiation. This chain is Rab-3A-interacting protein, found in Homo sapiens (Human).